An 851-amino-acid polypeptide reads, in one-letter code: Venom phosphodiesterase (851 aa).

The signal sequence occupies residues 1–23 (MIQQKVLFISLVAVALGLGLGLG). 2 consecutive SMB domains span residues 30–73 (PQVS…VLPT) and 74–118 (QSWS…GETS). Cystine bridges form between cysteine 34/cysteine 38, cysteine 34/cysteine 51, cysteine 38/cysteine 69, cysteine 49/cysteine 51, cysteine 49/cysteine 62, cysteine 55/cysteine 61, cysteine 62/cysteine 69, cysteine 78/cysteine 83, cysteine 78/cysteine 95, cysteine 83/cysteine 113, cysteine 93/cysteine 95, cysteine 93/cysteine 106, cysteine 99/cysteine 105, cysteine 106/cysteine 113, cysteine 124/cysteine 170, and cysteine 132/cysteine 344. Residue asparagine 39 is glycosylated (N-linked (GlcNAc...) asparagine). The short motif at 58–60 (RQA) is the Cell attachment site element. Aspartate 147 and threonine 185 together coordinate a divalent metal cation. Catalysis depends on threonine 185, which acts as the AMP-threonine intermediate. 3 N-linked (GlcNAc...) asparagine glycosylation sites follow: asparagine 216, asparagine 259, and asparagine 270. AMP is bound at residue lysine 271. Residues aspartate 305, histidine 309, aspartate 352, and histidine 353 each coordinate a divalent metal cation. Histidine 309 is an AMP binding site. 6 cysteine pairs are disulfide-bonded: cysteine 360-cysteine 457, cysteine 408-cysteine 793, cysteine 541-cysteine 599, cysteine 554-cysteine 654, cysteine 556-cysteine 639, and cysteine 762-cysteine 772. A glycan (N-linked (GlcNAc...) asparagine) is linked at asparagine 405. Histidine 462 is a binding site for a divalent metal cation. 3 N-linked (GlcNAc...) asparagine glycosylation sites follow: asparagine 512, asparagine 594, and asparagine 745.

It belongs to the nucleotide pyrophosphatase/phosphodiesterase family. As to quaternary structure, monomer cleaved in two subunits; disulfide-linked. Is synthesized as a single-chain protein and is subsequently cleaved to form a two-subunit protein held together with disulfide bonds. It depends on a divalent metal cation as a cofactor. As to expression, expressed by venom gland.

The protein resides in the secreted. The enzyme catalyses ADP + H2O = AMP + phosphate + H(+). Functionally, hydrolyzes ADP with high activity. Shows weak or no activity on 5'-AMP, 5'-GMP, 3'-AMP, ATP, cAMP, and cGMP. Is devoid of monophosphatase and proteinase activities. Dose-dependently inhibits platelet aggregation induced by ADP (IC(50)=0.99 uM) and collagen (IC(50)=1.4 uM). The chain is Venom phosphodiesterase from Macrovipera lebetinus (Levantine viper).